The primary structure comprises 275 residues: PE family protein PE8 (275 aa).

In terms of domain architecture, PE spans 5-93 (KTVPEELTAA…AGTYGVTESL (89 aa)).

Belongs to the mycobacterial PE family. As to quaternary structure, forms a heterodimer with PPE15. The dimer forms a 1:1:1 heterotrimeric complex with EspG5.

It is found in the secreted. The protein localises to the cell wall. Its function is as follows. Promotes the intracellular survival of recombinant Mycobacterium within macrophages by regulating host inflammatory cytokines production and inhibiting cell late apoptosis. The chain is PE family protein PE8 from Mycobacterium tuberculosis (strain ATCC 25618 / H37Rv).